The chain runs to 360 residues: Archaemetzincin-2 (360 aa).

His254 is a Zn(2+) binding site. Glu255 functions as the Proton acceptor in the catalytic mechanism. 6 residues coordinate Zn(2+): His258, His264, Cys265, Cys270, Cys289, and Cys292.

It belongs to the peptidase M54 family. Zn(2+) serves as cofactor.

In terms of biological role, probable zinc metalloprotease. In Macaca fascicularis (Crab-eating macaque), this protein is Archaemetzincin-2 (AMZ2).